The primary structure comprises 553 residues: MFCIQCEQTIQTPAVKGCSFAQGMCGKTAEVSDLQDVLVYSLQGVSYWATQAHRYGIINDEINQWAPKAFFSTLTNVNFDPERILQLTSQAAQFKAQLKDQVLTASSLANSPLSEVPAVAEFELPENAQAILAFAPQVAVNRGKESVHEDVIGLRLLCLYGLKGAAAYMEHARVLEQTSNDIYAEYHEIMAWLGTDPEDLGELLDCSMRIGLMNYKVMEMLDHGETATFGHPVPTAVNVKPVKGKCILVSGHDLHDLEKILQQTEGKGINVYTNGEMLPAHGYPELNKYPHLVGNYGSAWQNQQKEFANFPGAIVMTSNCLLNPNVGQYADRLFTRSIVGWPGVAHIEGDDFSAVIESALAQPGFQHDEIEHMITVGFGRNALMNAAPAVIDQVKQGNIKHFFLVGGCDGDKAERSYYTDFTEAAPEDTLILTLACGKFRFNKNTFGDINGIPRLLDVGQCNDAYSAIQLALALAQEFDCGINELPLTLVLSWFEQKAIVILLTLFALGVKGIYTGPTAPAFLTPNLIAIIQEKFDMRSIGNVQDDLNTILAA.

Residues Cys3, Cys6, Cys18, and Cys25 each coordinate [2Fe-2S] cluster. Residues His252, Glu276, Cys320, Cys408, Cys436, Cys461, Glu495, and Lys497 each contribute to the hybrid [4Fe-2O-2S] cluster site. At Cys408 the chain carries Cysteine persulfide.

Belongs to the HCP family. Requires [2Fe-2S] cluster as cofactor. It depends on hybrid [4Fe-2O-2S] cluster as a cofactor.

It is found in the cytoplasm. The enzyme catalyses A + NH4(+) + H2O = hydroxylamine + AH2 + H(+). In terms of biological role, catalyzes the reduction of hydroxylamine to form NH(3) and H(2)O. This Vibrio vulnificus (strain YJ016) protein is Hydroxylamine reductase.